A 279-amino-acid polypeptide reads, in one-letter code: Large ribosomal subunit protein uL3 (279 aa).

Gln151 bears the N5-methylglutamine mark.

This sequence belongs to the universal ribosomal protein uL3 family. As to quaternary structure, part of the 50S ribosomal subunit. Forms a cluster with proteins L14 and L19. Post-translationally, methylated by PrmB.

Its function is as follows. One of the primary rRNA binding proteins, it binds directly near the 3'-end of the 23S rRNA, where it nucleates assembly of the 50S subunit. The chain is Large ribosomal subunit protein uL3 from Dinoroseobacter shibae (strain DSM 16493 / NCIMB 14021 / DFL 12).